Reading from the N-terminus, the 241-residue chain is Pyridoxine 5'-phosphate synthase (241 aa).

Asn7 is a binding site for 3-amino-2-oxopropyl phosphate. 9–10 (DH) lines the 1-deoxy-D-xylulose 5-phosphate pocket. Arg18 serves as a coordination point for 3-amino-2-oxopropyl phosphate. His43 functions as the Proton acceptor in the catalytic mechanism. 1-deoxy-D-xylulose 5-phosphate contacts are provided by Arg45 and His50. Residue Glu70 is the Proton acceptor of the active site. Thr100 lines the 1-deoxy-D-xylulose 5-phosphate pocket. His190 (proton donor) is an active-site residue. Residues Gly191 and 212 to 213 (GH) each bind 3-amino-2-oxopropyl phosphate.

This sequence belongs to the PNP synthase family. Homooctamer; tetramer of dimers.

It localises to the cytoplasm. The enzyme catalyses 3-amino-2-oxopropyl phosphate + 1-deoxy-D-xylulose 5-phosphate = pyridoxine 5'-phosphate + phosphate + 2 H2O + H(+). The protein operates within cofactor biosynthesis; pyridoxine 5'-phosphate biosynthesis; pyridoxine 5'-phosphate from D-erythrose 4-phosphate: step 5/5. Functionally, catalyzes the complicated ring closure reaction between the two acyclic compounds 1-deoxy-D-xylulose-5-phosphate (DXP) and 3-amino-2-oxopropyl phosphate (1-amino-acetone-3-phosphate or AAP) to form pyridoxine 5'-phosphate (PNP) and inorganic phosphate. The sequence is that of Pyridoxine 5'-phosphate synthase from Bordetella avium (strain 197N).